Here is a 451-residue protein sequence, read N- to C-terminus: Glutamyl-tRNA reductase (451 aa).

Substrate-binding positions include 49 to 52 (TCNR), serine 109, 114 to 116 (EQQ), and glutamine 120. Catalysis depends on cysteine 50, which acts as the Nucleophile. 190-195 (GAGAMG) is an NADP(+) binding site.

Belongs to the glutamyl-tRNA reductase family. In terms of assembly, homodimer.

It carries out the reaction (S)-4-amino-5-oxopentanoate + tRNA(Glu) + NADP(+) = L-glutamyl-tRNA(Glu) + NADPH + H(+). It participates in porphyrin-containing compound metabolism; protoporphyrin-IX biosynthesis; 5-aminolevulinate from L-glutamyl-tRNA(Glu): step 1/2. Its function is as follows. Catalyzes the NADPH-dependent reduction of glutamyl-tRNA(Glu) to glutamate 1-semialdehyde (GSA). The sequence is that of Glutamyl-tRNA reductase from Mycolicibacterium smegmatis (strain ATCC 700084 / mc(2)155) (Mycobacterium smegmatis).